We begin with the raw amino-acid sequence, 156 residues long: Small ribosomal subunit protein uS7 (156 aa).

This sequence belongs to the universal ribosomal protein uS7 family. Part of the 30S ribosomal subunit. Contacts proteins S9 and S11.

Functionally, one of the primary rRNA binding proteins, it binds directly to 16S rRNA where it nucleates assembly of the head domain of the 30S subunit. Is located at the subunit interface close to the decoding center, probably blocks exit of the E-site tRNA. The chain is Small ribosomal subunit protein uS7 from Deinococcus radiodurans (strain ATCC 13939 / DSM 20539 / JCM 16871 / CCUG 27074 / LMG 4051 / NBRC 15346 / NCIMB 9279 / VKM B-1422 / R1).